The following is a 197-amino-acid chain: Probable GTP-binding protein EngB (197 aa).

An EngB-type G domain is found at 22–194; sequence DLPEIAFAGR…LETIARMTGI (173 aa). Residues 30-37, 57-61, 75-78, 142-145, and 173-175 each bind GTP; these read GRSNVGKS, GKTRL, DLPG, TKAD, and FST. Mg(2+)-binding residues include serine 37 and threonine 59.

The protein belongs to the TRAFAC class TrmE-Era-EngA-EngB-Septin-like GTPase superfamily. EngB GTPase family. It depends on Mg(2+) as a cofactor.

Functionally, necessary for normal cell division and for the maintenance of normal septation. The chain is Probable GTP-binding protein EngB from Desulfosudis oleivorans (strain DSM 6200 / JCM 39069 / Hxd3) (Desulfococcus oleovorans).